Here is a 315-residue protein sequence, read N- to C-terminus: Acetaldehyde dehydrogenase 2 (315 aa).

15 to 18 (SGNI) contributes to the NAD(+) binding site. Cysteine 135 functions as the Acyl-thioester intermediate in the catalytic mechanism. Residues 166–174 (SAGPGTRAN) and asparagine 293 contribute to the NAD(+) site.

Belongs to the acetaldehyde dehydrogenase family.

It carries out the reaction acetaldehyde + NAD(+) + CoA = acetyl-CoA + NADH + H(+). The chain is Acetaldehyde dehydrogenase 2 from Paraburkholderia phymatum (strain DSM 17167 / CIP 108236 / LMG 21445 / STM815) (Burkholderia phymatum).